The following is a 368-amino-acid chain: tRNA-specific 2-thiouridylase MnmA (368 aa).

ATP is bound by residues 11–18 and M37; that span reads GMSGGVDS. The interval 97–99 is interaction with target base in tRNA; it reads NPD. Residue C102 is the Nucleophile of the active site. C102 and C199 are joined by a disulfide. G127 is an ATP binding site. The tract at residues 149–151 is interaction with tRNA; that stretch reads KDQ. C199 (cysteine persulfide intermediate) is an active-site residue. The interval 311 to 312 is interaction with tRNA; the sequence is RY.

Belongs to the MnmA/TRMU family. In terms of assembly, interacts with TusE.

It is found in the cytoplasm. The catalysed reaction is S-sulfanyl-L-cysteinyl-[protein] + uridine(34) in tRNA + AH2 + ATP = 2-thiouridine(34) in tRNA + L-cysteinyl-[protein] + A + AMP + diphosphate + H(+). Its function is as follows. Catalyzes the 2-thiolation of uridine at the wobble position (U34) of tRNA(Lys), tRNA(Glu) and tRNA(Gln), leading to the formation of s(2)U34, the first step of tRNA-mnm(5)s(2)U34 synthesis. Sulfur is provided by IscS, via a sulfur-relay system. Binds ATP and its substrate tRNAs. This chain is tRNA-specific 2-thiouridylase MnmA, found in Klebsiella pneumoniae subsp. pneumoniae (strain ATCC 700721 / MGH 78578).